We begin with the raw amino-acid sequence, 579 residues long: MKDFSDVILCMEATESSKTEFCNPAFEPESGPPCPPPVFPEDASYSVPAPWHGRRPRGLRPDCRFSWLCVLLLSSLLLLLLGLLVAIILAQLQAAPPSGASHSPLPAGGLTTTTTTPTITTSQAAGTPKGQQESGVSPSPQSTCGGLLSGPRGFFSSPNYPDPYPPNTHCVWHIQVATDHAIQLKIEALSIESVASCLFDRLELSPEPEGPLLRVCGRVPPPTLNTNASHLLVVFVSDSSVEGFGFHAWYQAMAPGRGSCAHDEFRCDQLICLLPDSVCDGFANCADGSDETNCSAKFSGCGGNLTGLQGTFSTPSYLQQYPHQLLCTWHISVPAGHSIELQFHNFSLEAQDECKFDYVEVYETSSSGAFSLLGRFCGAEPPPHLVSSHHELAVLFRTDHGISSGGFSATYLAFNATENPCGPSELSCQAGGCKGVQWMCDMWRDCTDGSDDNCSGPLFPPPELACEPVQVEMCLGLSYNTTAFPNIWVGMITQEEVVEVLSGYKSLTSLPCYQHFRRLLCGLLVPRCTPLGSVLPPCRSVCQEAEHQCQSGLALLGTPWPFNCNRLPEAADLEACAQP.

The Cytoplasmic segment spans residues 1–69; the sequence is MKDFSDVILC…RPDCRFSWLC (69 aa). Residues 70-90 traverse the membrane as a helical; Signal-anchor for type II membrane protein segment; it reads VLLLSSLLLLLLGLLVAIILA. Residues 91–579 lie on the Extracellular side of the membrane; the sequence is QLQAAPPSGA…AADLEACAQP (489 aa). Residues 100 to 143 form a disordered region; sequence ASHSPLPAGGLTTTTTTPTITTSQAAGTPKGQQESGVSPSPQST. Residues 111–121 show a composition bias toward low complexity; it reads TTTTTTPTITT. Polar residues predominate over residues 122–143; that stretch reads SQAAGTPKGQQESGVSPSPQST. 2 disulfide bridges follow: cysteine 144/cysteine 170 and cysteine 197/cysteine 216. The CUB 1 domain occupies 144 to 253; sequence CGGLLSGPRG…FGFHAWYQAM (110 aa). Asparagine 227 is a glycosylation site (N-linked (GlcNAc...) asparagine). Residues 259–295 form the LDL-receptor class A 1 domain; that stretch reads SCAHDEFRCDQLICLLPDSVCDGFANCADGSDETNCS. Cystine bridges form between cysteine 260-cysteine 272, cysteine 267-cysteine 285, cysteine 279-cysteine 294, cysteine 301-cysteine 327, and cysteine 354-cysteine 377. The CUB 2 domain occupies 301–414; that stretch reads CGGNLTGLQG…GGFSATYLAF (114 aa). Asparagine 415 carries N-linked (GlcNAc...) asparagine glycosylation. Residues 420–455 enclose the LDL-receptor class A 2 domain; the sequence is PCGPSELSCQAGGCKGVQWMCDMWRDCTDGSDDNCS. 8 cysteine pairs are disulfide-bonded: cysteine 421-cysteine 433, cysteine 428-cysteine 446, cysteine 440-cysteine 454, cysteine 466-cysteine 528, cysteine 474-cysteine 521, cysteine 512-cysteine 549, cysteine 538-cysteine 576, and cysteine 542-cysteine 564. One can recognise an FZ domain in the interval 461–579; that stretch reads PPELACEPVQ…AADLEACAQP (119 aa).

Interacts with C1QTNF5. In terms of tissue distribution, specifically expressed in brain. Strongly expressed in medulla oblongata and to a lower extent in hippocampus and corpus callosum. Expressed in keratinocytes.

The protein localises to the apical cell membrane. In terms of biological role, may play a role in eye development. This chain is Membrane frizzled-related protein (MFRP), found in Homo sapiens (Human).